Consider the following 678-residue polypeptide: ATP-dependent RNA helicase DHX58 (678 aa).

The Helicase ATP-binding domain maps to 11-188; it reads ILPALEGKNI…QGAIDHILQL (178 aa). 24-31 is an ATP binding site; sequence LPTGAGKT. Residues 131-134 carry the DECH box motif; the sequence is DECH. In terms of domain architecture, Helicase C-terminal spans 353 to 514; sequence MLERILLKQF…KAVAAVQKMD (162 aa). Positions 489–546 form a coiled coil; that stretch reads EMKRELTNEALEVLMEKAVAAVQKMDPDEFKAKIRDLQQASLVKRAARAAHREIQQGQ. Residues 542–669 enclose the RLR CTR domain; it reads IQQGQFLPEH…PVFDILQDCT (128 aa). Positions 556, 559, 612, and 615 each coordinate Zn(2+). The RNA-binding stretch occupies residues 572–655; it reads VEGTHHVNVN…KIQAKKWSRV (84 aa).

The protein belongs to the helicase family. RLR subfamily. As to quaternary structure, monomer in the absence of dsRNA. Homodimer in the presence of dsRNA. Interacts with RIGI (via CARD domain), MAVS/IPS1 and DDX60. Found in a complex with RIGI and IFIH1/MDA5. Interacts with ANKRD17. Directly interacts with ATG5 and ATG12, either as ATG5 and ATG12 monomers or as ATG12-ATG5 conjugates. In terms of tissue distribution, highly expressed in mammary tissues. Expressed in liver and testis. Expressed at lower level in spleen, embryo, mammary gland and breast tumors.

Its subcellular location is the cytoplasm. The enzyme catalyses ATP + H2O = ADP + phosphate + H(+). Functionally, acts as a regulator of RIGI and IFIH1/MDA5 mediated antiviral signaling. Cannot initiate antiviral signaling as it lacks the CARD domain required for activating MAVS/IPS1-dependent signaling events. Can have both negative and positive regulatory functions related to RIGI and IFIH1/MDA5 signaling and this role in regulating signaling may be complex and could probably depend on characteristics of the infecting virus or target cells, or both. Its inhibitory action on RIG-I signaling may involve the following mechanisms: competition with RIGI for binding to the viral RNA, binding to RIGI and inhibiting its dimerization and interaction with MAVS/IPS1, competing with IKBKE in its binding to MAVS/IPS1 thereby inhibiting activation of interferon regulatory factor 3 (IRF3). Its positive regulatory role may involve unwinding or stripping nucleoproteins of viral RNA thereby facilitating their recognition by RIGI and IFIH1/MDA5. Involved in the innate immune response to various RNA viruses and some DNA viruses such as poxviruses, and also to the bacterial pathogen Listeria monocytogenes. Can bind both ssRNA and dsRNA, with a higher affinity for dsRNA. Shows a preference to 5'-triphosphorylated RNA, although it can recognize RNA lacking a 5'-triphosphate. The sequence is that of ATP-dependent RNA helicase DHX58 from Mus musculus (Mouse).